Consider the following 353-residue polypeptide: Putative transport protein aq_740 (353 aa).

A run of 8 helical transmembrane segments spans residues 4–24 (LSLF…LYLL), 28–48 (FNPI…YGFI), 60–80 (FLVI…FAVI), 156–176 (VYTA…LFFI), 209–229 (VLAV…MGFI), 240–260 (LIWA…AAFV), 268–288 (LFTT…TFLI), and 309–329 (VALF…GVFL).

Belongs to the autoinducer-2 exporter (AI-2E) (TC 2.A.86) family.

It localises to the cell membrane. This chain is Putative transport protein aq_740, found in Aquifex aeolicus (strain VF5).